A 149-amino-acid polypeptide reads, in one-letter code: Cyanate hydratase (149 aa).

Residues arginine 90, glutamate 93, and serine 116 contribute to the active site.

Belongs to the cyanase family.

The enzyme catalyses cyanate + hydrogencarbonate + 3 H(+) = NH4(+) + 2 CO2. Catalyzes the reaction of cyanate with bicarbonate to produce ammonia and carbon dioxide. This chain is Cyanate hydratase, found in Aquifex aeolicus (strain VF5).